Consider the following 336-residue polypeptide: PTS system glucitol/sorbitol-specific EIIB component (336 aa).

The 193-residue stretch at Lys3–Leu195 folds into the PTS EIIB type-5 domain. The Phosphocysteine intermediate; for EIIB activity role is filled by Cys75. Residue Cys75 is modified to Phosphocysteine; by EIIA. A run of 5 helical transmembrane segments spans residues Ile194–Gly214, Gly228–Gly248, Gly250–Ile270, Ala278–Ala298, and Val312–Ile332.

The protein resides in the cell membrane. The enzyme catalyses D-sorbitol(out) + N(pros)-phospho-L-histidyl-[protein] = D-sorbitol 6-phosphate(in) + L-histidyl-[protein]. Functionally, the phosphoenolpyruvate-dependent sugar phosphotransferase system (sugar PTS), a major carbohydrate active transport system, catalyzes the phosphorylation of incoming sugar substrates concomitantly with their translocation across the cell membrane. The enzyme II complex composed of SrlA, SrlB and SrlE is involved in glucitol/sorbitol transport. In Clostridium beijerinckii (strain ATCC 51743 / NCIMB 8052) (Clostridium acetobutylicum), this protein is PTS system glucitol/sorbitol-specific EIIB component (srlE).